A 289-amino-acid polypeptide reads, in one-letter code: Ribosomal RNA small subunit methyltransferase I (289 aa).

The protein belongs to the methyltransferase superfamily. RsmI family.

The protein localises to the cytoplasm. The enzyme catalyses cytidine(1402) in 16S rRNA + S-adenosyl-L-methionine = 2'-O-methylcytidine(1402) in 16S rRNA + S-adenosyl-L-homocysteine + H(+). Catalyzes the 2'-O-methylation of the ribose of cytidine 1402 (C1402) in 16S rRNA. This chain is Ribosomal RNA small subunit methyltransferase I, found in Helicobacter pylori (strain J99 / ATCC 700824) (Campylobacter pylori J99).